A 111-amino-acid polypeptide reads, in one-letter code: Glucosamine 6-phosphate N-acetyltransferase (111 aa).

The N-acetyltransferase domain occupies Met1 to Ile111. Substrate contacts are provided by residues Lys33–Arg36 and Glu45–Val47. Acetyl-CoA is bound by residues Val47–Val49 and Arg55–Lys60. Residues Tyr76 to Lys77 and Asp81 contribute to the substrate site. Position 90–92 (Tyr90–Lys92) interacts with acetyl-CoA.

It belongs to the acetyltransferase family. GNA1 subfamily.

It catalyses the reaction D-glucosamine 6-phosphate + acetyl-CoA = N-acetyl-D-glucosamine 6-phosphate + CoA + H(+). The protein operates within nucleotide-sugar biosynthesis; UDP-N-acetyl-alpha-D-glucosamine biosynthesis; N-acetyl-alpha-D-glucosamine 1-phosphate from alpha-D-glucosamine 6-phosphate (route I): step 1/2. This is Glucosamine 6-phosphate N-acetyltransferase (gna1) from Schizosaccharomyces pombe (strain 972 / ATCC 24843) (Fission yeast).